The chain runs to 137 residues: Golgin subfamily A member 7 (137 aa).

S-palmitoyl cysteine attachment occurs at residues Cys69 and Cys72.

Belongs to the ERF4 family. In terms of assembly, interacts with ZDHHC9.

The protein resides in the golgi apparatus membrane. Its function is as follows. May be involved in protein transport from Golgi to cell surface. The ZDHHC9-GOLGA7 complex is a palmitoyltransferase specific for HRAS and NRAS. This chain is Golgin subfamily A member 7 (GOLGA7), found in Gallus gallus (Chicken).